Consider the following 210-residue polypeptide: Outer-membrane lipoprotein LolB (210 aa).

Residues 1 to 18 form the signal peptide; sequence MKKLTKLLSLTLLFALAG. A lipid anchor (N-palmitoyl cysteine) is attached at C19. The S-diacylglycerol cysteine moiety is linked to residue C19.

It belongs to the LolB family. As to quaternary structure, monomer.

It is found in the cell outer membrane. In terms of biological role, plays a critical role in the incorporation of lipoproteins in the outer membrane after they are released by the LolA protein. This is Outer-membrane lipoprotein LolB from Glaesserella parasuis serovar 5 (strain SH0165) (Haemophilus parasuis).